We begin with the raw amino-acid sequence, 89 residues long: UPF0213 protein HQ_3675A (89 aa).

The GIY-YIG domain occupies 3–78 (DYHYVYIVEC…KSYTREKKQQ (76 aa)).

This sequence belongs to the UPF0213 family.

The sequence is that of UPF0213 protein HQ_3675A from Haloquadratum walsbyi (strain DSM 16790 / HBSQ001).